The sequence spans 150 residues: Small ribosomal subunit protein eS6 (150 aa).

This sequence belongs to the eukaryotic ribosomal protein eS6 family.

The polypeptide is Small ribosomal subunit protein eS6 (Caldivirga maquilingensis (strain ATCC 700844 / DSM 13496 / JCM 10307 / IC-167)).